The sequence spans 239 residues: Xyloglucan-specific endo-beta-1,4-glucanase A (239 aa).

The N-terminal stretch at 1-14 (MKLLALSLASLASA) is a signal peptide. N172 is a glycosylation site (N-linked (GlcNAc...) asparagine).

Belongs to the glycosyl hydrolase 12 (cellulase H) family.

The protein localises to the secreted. The enzyme catalyses xyloglucan + H2O = xyloglucan oligosaccharides.. Catalyzes endohydrolysis of 1,4-beta-D-glucosidic linkages in xyloglucan with retention of the beta-configuration of the glycosyl residues. Specific for xyloglucan and does not hydrolyze other cell wall components. Active against tamarind xyloglucan. The chain is Xyloglucan-specific endo-beta-1,4-glucanase A (xgeA) from Emericella nidulans (strain FGSC A4 / ATCC 38163 / CBS 112.46 / NRRL 194 / M139) (Aspergillus nidulans).